The following is a 444-amino-acid chain: Xylose isomerase (444 aa).

The Mg(2+) site is built by D307 and D309.

The protein belongs to the xylose isomerase family. In terms of assembly, homotetramer. Mg(2+) serves as cofactor.

The protein localises to the cytoplasm. It catalyses the reaction alpha-D-xylose = alpha-D-xylulofuranose. The sequence is that of Xylose isomerase from Thermotoga neapolitana (strain ATCC 49049 / DSM 4359 / NBRC 107923 / NS-E).